The sequence spans 638 residues: Sodium- and chloride-dependent glycine transporter 1 (638 aa).

Positions 1-30 (MAVAHGPVATSSPEQNGAVPSEATKKDQNL) are disordered. Topologically, residues 1–40 (MAVAHGPVATSSPEQNGAVPSEATKKDQNLTRGNWGNQIE) are cytoplasmic. 3 consecutive transmembrane segments (helical) span residues 41 to 61 (FVLT…FPYL), 68 to 88 (GAFM…LFFM), and 120 to 140 (VSTY…YYFF). Over 141-217 (SSMTHVLPWA…LSDDIGDFGE (77 aa)) the chain is Extracellular. Residues asparagine 169, asparagine 172, asparagine 182, and asparagine 188 are each glycosylated (N-linked (GlcNAc...) asparagine). 9 consecutive transmembrane segments (helical) span residues 218-238 (VRLP…LCLI), 247-267 (VVYF…VRGV), 292-312 (VWGD…GGLI), 339-359 (SVYA…HLGV), 382-402 (LLPI…LLGL), 438-458 (VAGF…WLLL), 462-482 (YAAS…IMYI), 502-522 (LFFQ…ILIF), and 542-562 (VAIG…YALF). At 563-638 (QLCRTDGDTL…GSSRLQDSRI (76 aa)) the chain is on the cytoplasmic side. A Phosphothreonine modification is found at threonine 603. Phosphoserine occurs at positions 605 and 630. The essential for interaction with EXOC1 stretch occupies residues 627 to 638 (SNGSSRLQDSRI).

It belongs to the sodium:neurotransmitter symporter (SNF) (TC 2.A.22) family. SLC6A9 subfamily. As to quaternary structure, interacts with EXOC1; interaction increases the transporter capacity of SLC6A9 probably by promoting its insertion into the cell membrane. Interacts with EXOC3 and EXOC4. Found only in the white matter of the CNS. As to expression, found in the gray matter of CNS as well as in macrophages and mast cells in peripheral tissues.

It localises to the cell membrane. It carries out the reaction glycine(out) + chloride(out) + 2 Na(+)(out) = glycine(in) + chloride(in) + 2 Na(+)(in). With respect to regulation, inhibited by sarcosine. In terms of biological role, sodium- and chloride-dependent glycine transporter. Essential for regulating glycine concentrations at inhibitory glycinergic synapses. The protein is Sodium- and chloride-dependent glycine transporter 1 (Slc6a9) of Rattus norvegicus (Rat).